The following is a 143-amino-acid chain: Small ribosomal subunit protein uS12 (143 aa).

It belongs to the universal ribosomal protein uS12 family. As to quaternary structure, component of the 40S small ribosomal subunit.

The protein localises to the cytoplasm. Its subcellular location is the cytosol. It localises to the rough endoplasmic reticulum. This chain is Small ribosomal subunit protein uS12 (rps23), found in Gillichthys mirabilis (Long-jawed mudsucker).